The sequence spans 267 residues: MSGCFPVSGLRCLSRDGRMAAQGAPRFLLTFDFDETIVDENSDDSIVRAAPGQRLPESLRATYREGFYNEYMQRVFKYLGEQGVRPRDLSAIYEAIPLSPGMSDLLQFVAKQGACFEVILISDANTFGVESSLRAAGHHSLFRRILSNPSGPDARGLLALRPFHTHSCARCPANMCKHKVLSDYLRERAHDGVHFERLFYVGDGANDFCPMGLLAGGDVAFPRRGYPMHRLIQEAQKAEPSSFRASVVPWETAADVRLHLQQVLKSC.

Aspartate 32 acts as the Nucleophile in catalysis. Mg(2+) is bound by residues aspartate 32 and aspartate 34. The active-site Proton donor is the aspartate 34. Substrate is bound by residues aspartate 43 and aspartate 123. Aspartate 203 provides a ligand contact to Mg(2+).

The protein belongs to the HAD-like hydrolase superfamily. PHOSPHO family. It depends on Mg(2+) as a cofactor. In terms of tissue distribution, expressed at sites of mineralization in bone and cartilage. Highly expressed in osteoblast cell line SaOS-2 which produces a mineralized matrix, but not in MG-63 cell line, which do not mineralize.

The protein resides in the extracellular vesicle. The catalysed reaction is phosphoethanolamine + H2O = ethanolamine + phosphate. It catalyses the reaction phosphocholine + H2O = choline + phosphate. In terms of biological role, phosphatase that has a high activity toward phosphoethanolamine (PEA) and phosphocholine (PCho). Involved in the generation of inorganic phosphate for bone mineralization. Acts in a non-redundant manner with PHOSPHO1 in skeletal mineralization: while PHOSPHO1 mediates the initiation of hydroxyapatite crystallization in the matrix vesicles (MVs), ALPL/TNAP catalyzes the spread of hydroxyapatite crystallization in the extracellular matrix. This Homo sapiens (Human) protein is Phosphoethanolamine/phosphocholine phosphatase.